Here is a 481-residue protein sequence, read N- to C-terminus: Putative cytochrome P450 520B1 (481 aa).

Cys427 provides a ligand contact to heme.

Belongs to the cytochrome P450 family. Heme serves as cofactor.

The sequence is that of Putative cytochrome P450 520B1 (cyp520B1) from Dictyostelium discoideum (Social amoeba).